Here is a 181-residue protein sequence, read N- to C-terminus: MFKKFDEKENVSNCIQLKTSVIKGIKNQLIDQFPGIEQWLNQIMPKKDPVKIVRCHEHIEILTVNGELLFFRQREGPFYPTLRLLHKYPFILPHQQVDKGAIKFVLSGANIMCPGLTSPGAKLYPAAADTVVAIMAEGKQHALCVGVMKMSADDIEKINKGIGIENIHYLNDGLWHMKTYK.

Residues Leu-92–Asn-171 form the PUA domain.

The protein belongs to the MCTS1 family.

The protein localises to the cytoplasm. Plays a role as translation enhancer and involved in cell cycle regulation. This chain is Malignant T-cell-amplified sequence 1-A (mcts1-a), found in Xenopus laevis (African clawed frog).